The following is a 357-amino-acid chain: 3-isopropylmalate dehydrogenase (357 aa).

NAD(+) is bound at residue 77 to 90; sequence GPKWDNLEGSKRPE. Positions 97, 107, 136, and 224 each coordinate substrate. Positions 224, 248, and 252 each coordinate Mg(2+). 282-294 provides a ligand contact to NAD(+); the sequence is GSAPDIAGLDIAN.

Belongs to the isocitrate and isopropylmalate dehydrogenases family. LeuB type 1 subfamily. In terms of assembly, homodimer. The cofactor is Mg(2+). Mn(2+) is required as a cofactor.

It localises to the cytoplasm. It carries out the reaction (2R,3S)-3-isopropylmalate + NAD(+) = 4-methyl-2-oxopentanoate + CO2 + NADH. It functions in the pathway amino-acid biosynthesis; L-leucine biosynthesis; L-leucine from 3-methyl-2-oxobutanoate: step 3/4. In terms of biological role, catalyzes the oxidation of 3-carboxy-2-hydroxy-4-methylpentanoate (3-isopropylmalate) to 3-carboxy-4-methyl-2-oxopentanoate. The product decarboxylates to 4-methyl-2 oxopentanoate. The polypeptide is 3-isopropylmalate dehydrogenase (leuB) (Clostridium pasteurianum).